The sequence spans 580 residues: Mucolipin-1 (580 aa).

The interval 1-38 is disordered; the sequence is MTAPAGPRGSETERLLTPNPGYGTQAGPSPAPPTPPEE. Residues 1-65 are Cytoplasmic-facing; sequence MTAPAGPRGS…FRAKGRKPCK (65 aa). The residue at position 10 (S10) is a Phosphoserine. The Dileucine motif; mediates targeting to lysosomes signature appears at 11 to 16; the sequence is ETERLL. An interaction with phosphoinositides region spans residues 42-62; it reads RRRLKYFFMSPCDKFRAKGRK. Residues 66–86 traverse the membrane as a helical segment; sequence LMLQVVKILVVTVQLILFGLS. Over 87–298 the chain is Extracellular; that stretch reads NQLAVTFREE…VFQHGDNSFR (212 aa). Residues 107–121 form an extracellular/lumenal pore loop region; the sequence is LGYSDGADDTFAAYT. Residues C166 and C192 are joined by a disulfide bond. An N-linked (GlcNAc...) asparagine glycan is attached at N230. C253 and C284 are oxidised to a cystine. Residues 299–321 form a helical membrane-spanning segment; it reads LLFDVVVILTCSLSFLLCARSLL. The Cytoplasmic portion of the chain corresponds to 322–350; that stretch reads RGFLLQNEFVGFMWRQRGRVISLWERLEF. A helical membrane pass occupies residues 351–371; sequence VNGWYILLVTSDVLTISGTIM. The Extracellular segment spans residues 372 to 382; sequence KIGIEAKNLAS. A helical transmembrane segment spans residues 383–405; the sequence is YDVCSILLGTSTLLVWVGVIRYL. At 406–427 the chain is on the cytoplasmic side; the sequence is TFFHNYNILIATLRVALPSVMR. A helical transmembrane segment spans residues 428 to 448; it reads FCCCVAVIYLGYCFCGWIVLG. At 449-456 the chain is on the extracellular side; that stretch reads PYHVKFRS. The segment at residues 457–477 is an intramembrane region (pore-forming); it reads LSMVSECLFSLINGDDMFVTF. The Selectivity filter motif lies at 469–474; it reads NGDDMF. The Extracellular portion of the chain corresponds to 478–491; that stretch reads AAMQAQQGRSSLVW. The helical transmembrane segment at 492-513 threads the bilayer; it reads LFSQLYLYSFISLFIYMVLSLF. Residues 514 to 580 are Cytoplasmic-facing; the sequence is IALITGAYDT…PSEEHSLLVN (67 aa). Residues S557 and S559 each carry the phosphoserine; by PAK modification. The tract at residues 565–567 is required for palmitoylation and association with membranes; the sequence is CCC. Positions 573–578 match the Dileucine internalization motif; mediates AP2 complex-dependent internalization motif; it reads EEHSLL.

This sequence belongs to the transient receptor (TC 1.A.4) family. Polycystin subfamily. MCOLN1 sub-subfamily. In terms of assembly, homotetramer. Homooligomer. Can heterooligomerize with MCOLN2 or MCOLN3; heteromeric assemblies have different channel properties as compared to the respective homooligomers and may be tissue-specific. Interacts with PDCD6. Interacts with TMEM163. Interacts with LAPTM4B. Post-translationally, palmitoylated; involved in association with membranes. In terms of processing, phosphorylation by PKA inhibits channel activity. Dephosphorylation increases activity. Proteolytically cleaved probably involving multiple lysosomal proteases including cathepsin B; inhibits lysosomal channel activity. As to expression, widely expressed in adult and fetal tissues.

The protein localises to the late endosome membrane. It is found in the lysosome membrane. The protein resides in the cytoplasmic vesicle membrane. Its subcellular location is the cell projection. It localises to the phagocytic cup. The protein localises to the cytoplasmic vesicle. It is found in the phagosome membrane. The protein resides in the cell membrane. The catalysed reaction is Ca(2+)(in) = Ca(2+)(out). It catalyses the reaction Fe(2+)(in) = Fe(2+)(out). It carries out the reaction Mg(2+)(in) = Mg(2+)(out). The enzyme catalyses K(+)(in) = K(+)(out). The catalysed reaction is Na(+)(in) = Na(+)(out). Its activity is regulated as follows. Channel activity is controlled by multiple regulatory mechanisms in different subcellular compartments. Channel function is transiently modulated by changes in Ca(2+) in a pH-dependent manner; pH changes modify the aggregation state of unitary channels; a negative cooperativity between extracellular/lumenal Ca(2+) and H(+) is suggested. Regulated by phosphoinositides in a compartment-specific manner: in lysosomes activated by PtdIns(3,5)P2 (Phosphatidylinositol 3,5-bisphosphate) and at the plasma membrane inhibited by PtdIns(4,5)P2 (Phosphatidylinositol 4,5-bisphosphate). Functionally, nonselective cation channel probably playing a role in the regulation of membrane trafficking events and of metal homeostasis. Acts as a Ca(2+)-permeable cation channel with inwardly rectifying activity. Proposed to play a major role in Ca(2+) release from late endosome and lysosome vesicles to the cytoplasm, which is important for many lysosome-dependent cellular events, including the fusion and trafficking of these organelles, exocytosis and autophagy. Required for efficient uptake of large particles in macrophages in which Ca(2+) release from the lysosomes triggers lysosomal exocytosis. May also play a role in phagosome-lysosome fusion. Involved in lactosylceramide trafficking indicative for a role in the regulation of late endocytic membrane fusion/fission events. By mediating lysosomal Ca(2+) release is involved in regulation of mTORC1 signaling and in mTOR/TFEB-dependent lysosomal adaptation to environmental cues such as nutrient levels. Seems to act as lysosomal active oxygen species (ROS) sensor involved in ROS-induced TFEB activation and autophagy. Also functions as a Fe(2+) permeable channel in late endosomes and lysosomes. Also permeable to Mg(2+), Na(+). K(+) and Cs(+). Proposed to play a role in zinc homeostasis probably implicating its association with TMEM163 In adaptive immunity, TRPML2 and TRPML1 may play redundant roles in the function of the specialized lysosomes of B cells. May contribute to cellular lipase activity within the late endosomal pathway or at the cell surface which may be involved in processes of membrane reshaping and vesiculation, especially the growth of tubular structures. However, it is not known, whether it conveys the enzymatic activity directly, or merely facilitates the activity of an associated phospholipase. The sequence is that of Mucolipin-1 from Homo sapiens (Human).